A 394-amino-acid chain; its full sequence is Elongation factor Tu 1 (394 aa).

The region spanning 10 to 204 is the tr-type G domain; that stretch reads KPHVNVGTIG…ALDSYIPEPQ (195 aa). Residues 19-26 are G1; sequence GHVDHGKT. 19–26 is a GTP binding site; it reads GHVDHGKT. Thr26 contacts Mg(2+). A G2 region spans residues 60–64; that stretch reads GITIN. A G3 region spans residues 81-84; that stretch reads DCPG. Residues 81–85 and 136–139 contribute to the GTP site; these read DCPGH and NKCD. The G4 stretch occupies residues 136 to 139; that stretch reads NKCD. The G5 stretch occupies residues 174–176; sequence SAL.

Belongs to the TRAFAC class translation factor GTPase superfamily. Classic translation factor GTPase family. EF-Tu/EF-1A subfamily. As to quaternary structure, monomer.

The protein localises to the cytoplasm. The catalysed reaction is GTP + H2O = GDP + phosphate + H(+). In terms of biological role, GTP hydrolase that promotes the GTP-dependent binding of aminoacyl-tRNA to the A-site of ribosomes during protein biosynthesis. The chain is Elongation factor Tu 1 from Shewanella baltica (strain OS195).